The chain runs to 286 residues: Beta-lactamase SHV-29 (286 aa).

An N-terminal signal peptide occupies residues 1–21 (MRYIRLCIISLLATLPLAVHA). Catalysis depends on serine 66, which acts as the Acyl-ester intermediate. Cysteine 73 and cysteine 119 form a disulfide bridge. Glutamate 164 functions as the Proton acceptor in the catalytic mechanism. Residue 230-232 (KTG) participates in substrate binding.

The protein belongs to the class-A beta-lactamase family.

It catalyses the reaction a beta-lactam + H2O = a substituted beta-amino acid. The protein is Beta-lactamase SHV-29 (bla) of Klebsiella pneumoniae.